The following is a 38-amino-acid chain: Histidine decarboxylase small chain (38 aa).

In terms of assembly, heterohexamer of 3 large and 3 small chains. The cofactor is pyruvate.

The enzyme catalyses L-histidine + H(+) = histamine + CO2. This is Histidine decarboxylase small chain from Micrococcus sp.